We begin with the raw amino-acid sequence, 369 residues long: Phosphoribosyl pyrophosphate synthase-associated protein 2 (369 aa).

Residue Met-1 is modified to N-acetylmethionine. Phosphoserine is present on residues Ser-219, Ser-227, and Ser-233.

Belongs to the ribose-phosphate pyrophosphokinase family. In terms of assembly, binds to PRPS1 and PRPS2. In terms of tissue distribution, ubiquitous.

Functionally, seems to play a negative regulatory role in 5-phosphoribose 1-diphosphate synthesis. The chain is Phosphoribosyl pyrophosphate synthase-associated protein 2 (Prpsap2) from Rattus norvegicus (Rat).